Consider the following 402-residue polypeptide: Propionate kinase (402 aa).

2 residues coordinate ATP: Asn-11 and Lys-18. Residue Asn-11 coordinates Mg(2+). Arg-86 is a binding site for substrate. Asp-143 (proton donor/acceptor) is an active-site residue. ATP contacts are provided by residues His-175, 203 to 207 (HLGNG), 278 to 280 (DLR), and 326 to 330 (GIGEN).

This sequence belongs to the acetokinase family. TdcD subfamily. Homodimer. It depends on Mg(2+) as a cofactor.

The enzyme catalyses propanoate + ATP = propanoyl phosphate + ADP. It participates in amino-acid degradation; L-threonine degradation via propanoate pathway; propanoate from L-threonine: step 4/4. In terms of biological role, catalyzes the conversion of propionyl phosphate and ADP to propionate and ATP. The sequence is that of Propionate kinase from Salmonella typhimurium (strain D23580).